The sequence spans 599 residues: Mediator of RNA polymerase II transcription subunit 26 (599 aa).

The 78-residue stretch at Gln10–Val87 folds into the TFIIS N-terminal domain. 3 disordered regions span residues Ala98 to Leu331, Ala352 to Thr403, and Phe427 to Pro470. Basic and acidic residues predominate over residues Ser123–Met133. Polar residues predominate over residues Val174 to Ser191. Residues Asn207–Ser218 are compositionally biased toward basic and acidic residues. Positions Ser314–Pro324 are enriched in pro residues. The span at Glu441–Ala463 shows a compositional bias: basic and acidic residues. 2 positions are modified to phosphoserine: Ser447 and Ser469.

Belongs to the Mediator complex subunit 26 family. In terms of assembly, component of the Mediator complex, which is composed of MED1, MED4, MED6, MED7, MED8, MED9, MED10, MED11, MED12, MED13, MED13L, MED14, MED15, MED16, MED17, MED18, MED19, MED20, MED21, MED22, MED23, MED24, MED25, MED26, MED27, MED29, MED30, MED31, CCNC, CDK8 and CDC2L6/CDK11. The MED12, MED13, CCNC and CDK8 subunits form a distinct module termed the CDK8 module. Mediator containing the CDK8 module is less active than Mediator lacking this module in supporting transcriptional activation. Individual preparations of the Mediator complex lacking one or more distinct subunits have been variously termed ARC, CRSP, DRIP, PC2, SMCC and TRAP. Interacts with CEBPB (when not methylated).

It localises to the nucleus. Component of the Mediator complex, a coactivator involved in the regulated transcription of nearly all RNA polymerase II-dependent genes. Mediator functions as a bridge to convey information from gene-specific regulatory proteins to the basal RNA polymerase II transcription machinery. Mediator is recruited to promoters by direct interactions with regulatory proteins and serves as a scaffold for the assembly of a functional pre-initiation complex with RNA polymerase II and the general transcription factors. This chain is Mediator of RNA polymerase II transcription subunit 26 (MED26), found in Bos taurus (Bovine).